Consider the following 246-residue polypeptide: Uridylate kinase (246 aa).

10–13 (KLSG) provides a ligand contact to ATP. Residue glycine 52 coordinates UMP. ATP contacts are provided by glycine 53 and arginine 57. UMP is bound by residues aspartate 72 and 133 to 140 (TGNPFFTT). Residues threonine 160, tyrosine 166, and aspartate 169 each coordinate ATP.

The protein belongs to the UMP kinase family. As to quaternary structure, homohexamer.

The protein localises to the cytoplasm. The enzyme catalyses UMP + ATP = UDP + ADP. It participates in pyrimidine metabolism; CTP biosynthesis via de novo pathway; UDP from UMP (UMPK route): step 1/1. Inhibited by UTP. Functionally, catalyzes the reversible phosphorylation of UMP to UDP. This Halorhodospira halophila (strain DSM 244 / SL1) (Ectothiorhodospira halophila (strain DSM 244 / SL1)) protein is Uridylate kinase.